We begin with the raw amino-acid sequence, 616 residues long: Chaperone protein HscA homolog (616 aa).

The protein belongs to the heat shock protein 70 family.

Its function is as follows. Chaperone involved in the maturation of iron-sulfur cluster-containing proteins. Has a low intrinsic ATPase activity which is markedly stimulated by HscB. The chain is Chaperone protein HscA homolog from Histophilus somni (strain 2336) (Haemophilus somnus).